Consider the following 107-residue polypeptide: MSAFSLSDLERIVAKRAAASPDESWTAKLVAAGQERAAKKLGEEAVEAVIAAIAQDRDGLKNEAADLLYHLLVVLKIADIPLSDVFAELERRTGQTGLAEKAARPTP.

The protein belongs to the PRA-PH family.

It localises to the cytoplasm. The catalysed reaction is 1-(5-phospho-beta-D-ribosyl)-ATP + H2O = 1-(5-phospho-beta-D-ribosyl)-5'-AMP + diphosphate + H(+). It functions in the pathway amino-acid biosynthesis; L-histidine biosynthesis; L-histidine from 5-phospho-alpha-D-ribose 1-diphosphate: step 2/9. The chain is Phosphoribosyl-ATP pyrophosphatase (hisE) from Agrobacterium fabrum (strain C58 / ATCC 33970) (Agrobacterium tumefaciens (strain C58)).